The sequence spans 46 residues: Protein PsbN (46 aa).

A helical transmembrane segment spans residues 5-27; sequence TLVTLFVSGLLMSFTGYALYTAF.

This sequence belongs to the PsbN family.

Its subcellular location is the plastid membrane. In terms of biological role, may play a role in photosystem I and II biogenesis. The chain is Protein PsbN from Cuscuta obtusiflora (Peruvian dodder).